A 153-amino-acid polypeptide reads, in one-letter code: Small ribosomal subunit protein bS16 (153 aa).

Residues 130–153 (EAEAAAAAEEAPAEEAAEEAPAEA) are disordered. Acidic residues predominate over residues 140 to 153 (APAEEAAEEAPAEA).

It belongs to the bacterial ribosomal protein bS16 family.

The polypeptide is Small ribosomal subunit protein bS16 (Bifidobacterium longum subsp. infantis (strain ATCC 15697 / DSM 20088 / JCM 1222 / NCTC 11817 / S12)).